The chain runs to 171 residues: Mitoferrin-1 (171 aa).

The tract at residues 1 to 40 is disordered; the sequence is MELRRGGVGSQARARRMDGDSRDGGGGCKDAGSEDYENLP. The stretch at 43–131 is one Solcar repeat; it reads ASLSTHMTAG…FACYENMKRT (89 aa). Transmembrane regions (helical) follow at residues 45–64, 105–125, and 143–163; these read LSTH…SVMY, RGLN…FACY, and HLAN…PSTD.

The protein belongs to the mitochondrial carrier (TC 2.A.29) family. As to quaternary structure, interacts with ACB10; this interaction stabilizes SLC25A37 and enhances the function of SLC25A37 to import mitochondrial iron during erythroid differentiation.

It localises to the mitochondrion inner membrane. The enzyme catalyses Fe(2+)(in) = Fe(2+)(out). Functionally, mitochondrial iron transporter that specifically mediates iron uptake in developing erythroid cells, thereby playing an essential role in heme biosynthesis. The chain is Mitoferrin-1 (SLC25A37) from Bos taurus (Bovine).